Here is a 376-residue protein sequence, read N- to C-terminus: Arginine/serine-rich coiled-coil protein 2 (376 aa).

The tract at residues 1-171 (MIRTNFLLKQ…PSPPPFRGRN (171 aa)) is disordered. Positions 13-52 (RHESKDKSSKRHKSEEHNDKEHSSDKGRERLNSSENGEDR) are enriched in basic and acidic residues. Phosphoserine is present on serine 45. Residues 53–155 (HKRKERKSSR…KRIEKPRRFS (103 aa)) are compositionally biased toward basic residues. Residues 171 to 214 (NTAMDAQEALARRLERAKKLQEQREKEMVEKQKQQEMAAAAAAT) are a coiled coil. Lysine 317 is covalently cross-linked (Glycyl lysine isopeptide (Lys-Gly) (interchain with G-Cter in SUMO1); alternate). Lysine 317 participates in a covalent cross-link: Glycyl lysine isopeptide (Lys-Gly) (interchain with G-Cter in SUMO2); alternate. Serine 318 carries the post-translational modification Phosphoserine.

This sequence belongs to the RSRC2 family.

This chain is Arginine/serine-rich coiled-coil protein 2 (Rsrc2), found in Rattus norvegicus (Rat).